A 157-amino-acid polypeptide reads, in one-letter code: Small ribosomal subunit protein uS7 (157 aa).

The protein belongs to the universal ribosomal protein uS7 family. As to quaternary structure, part of the 30S ribosomal subunit. Contacts proteins S9 and S11.

Functionally, one of the primary rRNA binding proteins, it binds directly to 16S rRNA where it nucleates assembly of the head domain of the 30S subunit. Is located at the subunit interface close to the decoding center, probably blocks exit of the E-site tRNA. In Chlamydia felis (strain Fe/C-56) (Chlamydophila felis), this protein is Small ribosomal subunit protein uS7.